The chain runs to 1659 residues: Intersectin-2 (1659 aa).

In terms of domain architecture, EH 1 spans 22-110 (ERTKHDKQFD…PIMKQPPMFS (89 aa)). An EF-hand 1 domain is found at 54–89 (LPAPVLAEIWALSDLNKDGKMDQQEFSIAMKLIKLK). Ca(2+)-binding residues include D67, N69, D71, K73, and E78. Phosphoserine occurs at positions 110, 211, and 231. Over residues 220-231 (STSSTASLSGNS) the composition is skewed to low complexity. The tract at residues 220–242 (STSSTASLSGNSPKTGTSEWAVP) is disordered. An EH 2 domain is found at 245-334 (SRLKYRQKFN…PELVPPSFRG (90 aa)). Positions 278 to 313 (LSQTQLATIWTLADIDGDGQLKAEEFILAMHLTDMA) constitute an EF-hand 2 domain. The segment at 335-382 (GKQVDSVNGTLPSYQKTQEEEPQKKLPVTFEDKRKANYERGNMELEKR) is disordered. Polar residues predominate over residues 339–350 (DSVNGTLPSYQK). Over residues 351-382 (TQEEEPQKKLPVTFEDKRKANYERGNMELEKR) the composition is skewed to basic and acidic residues. Residues 365–717 (EDKRKANYER…KAEAKQSETA (353 aa)) adopt a coiled-coil conformation. Y554 bears the Phosphotyrosine mark. T574 carries the phosphothreonine modification. A compositionally biased stretch (basic and acidic residues) spans 689–713 (KQKRLQEEKSQDKTQEEERKAEAKQ). The interval 689 to 715 (KQKRLQEEKSQDKTQEEERKAEAKQSE) is disordered. The 62-residue stretch at 718-779 (SALVNYRALY…PCNYVEKVLS (62 aa)) folds into the SH3 1 domain. Residue T836 is modified to Phosphothreonine. S838 and S843 each carry phosphoserine. The 59-residue stretch at 852–910 (VENLKAQALCSWTAKKENHLNFSKHDVITVLEQQENWWFGEVHGGRGWFPKSYVKLIPG) folds into the SH3 2 domain. Y922 carries the post-translational modification Phosphotyrosine. SH3 domains follow at residues 942 to 1000 (PVGE…PKDQ), 1014 to 1078 (KKPE…LLGP), and 1088 to 1147 (HAVC…MTTD). A DH domain is found at 1170 to 1357 (KRQGYIHELI…EELCSQVNEG (188 aa)). A PH domain is found at 1396–1506 (KLLHSGKLYK…WVQKIKGASE (111 aa)). The 117-residue stretch at 1514–1630 (KKREKAYQAR…RTEQESKGPT (117 aa)) folds into the C2 domain. Ca(2+)-binding residues include D1602, S1605, and D1608.

In terms of assembly, belongs to a complex that may contain multimers of ITSN1, ITSN2 and EPS15, and different partners according to the step in the endocytic process. Interacts with ADAM15. Interacts with FASLG. Interacts with ANKRD54. Interacts with FCHO2. The cofactor is Ca(2+). Widely expressed in adult tissues.

It localises to the cytoplasm. Functionally, adapter protein that may provide indirect link between the endocytic membrane traffic and the actin assembly machinery. May regulate the formation of clathrin-coated vesicles (CCPs). Seems to be involved in CCPs maturation including invagination or budding. Involved in endocytosis of integrin beta-1 (ITGB1) and transferrin receptor (TFR). Plays a role in dendrite formation by melanocytes. In Mus musculus (Mouse), this protein is Intersectin-2 (Itsn2).